The sequence spans 204 residues: Cytochrome bo(3) ubiquinol oxidase subunit 3 (204 aa).

The Cytoplasmic portion of the chain corresponds to 1–31 (MATDTLTHATAHAHEHGHHDAGGTKIFGFWI). A helical membrane pass occupies residues 32 to 50 (YLMSDCILFSILFATYAVL). At 51–66 (VNGTAGGPTGKDIFEL) the chain is on the periplasmic side. A helical transmembrane segment spans residues 67–85 (PFVLVETFLLLFSSITYGM). Residues 86-101 (AAIAMYKNNKSQVISW) lie on the Cytoplasmic side of the membrane. A helical membrane pass occupies residues 102 to 120 (LALTWLFGAGFIGMEIYEF). At 121-142 (HHLIVNGMGPDRSGFLSAFFAL) the chain is on the periplasmic side. The helical transmembrane segment at 143–161 (VGTHGLHVTSGLIWMAVLM) threads the bilayer. Residues 162–184 (VQIARRGLTSTNRTRIMCLSLFW) are Cytoplasmic-facing. Residues 185 to 203 (HFLDVVWICVFTVVYLMGA) traverse the membrane as a helical segment. A topological domain (periplasmic) is located at residue Met-204.

Belongs to the cytochrome c oxidase subunit 3 family. In terms of assembly, heterooctamer of two A chains, two B chains, two C chains and two D chains.

The protein localises to the cell inner membrane. Its function is as follows. Cytochrome bo(3) ubiquinol terminal oxidase is the component of the aerobic respiratory chain of E.coli that predominates when cells are grown at high aeration. Has proton pump activity across the membrane in addition to electron transfer, pumping 2 protons/electron. The polypeptide is Cytochrome bo(3) ubiquinol oxidase subunit 3 (cyoC) (Escherichia coli O6:H1 (strain CFT073 / ATCC 700928 / UPEC)).